We begin with the raw amino-acid sequence, 243 residues long: MEAKDRLIVALDVDTRDEAISIVNAVGEHCGLFKVGMQLHNSAGFAVTEEILSMGFPVFLDLKFHDIPNTVGKAATVVSRRGVKMFTVHAAGGREMLRQAVKGAREGQGERRSGGPLVLAITVLTSVSQAVLHDEVGLPGSVEENVVRFARLAQAAGVQGVVASPQEIRPIRAACGDDFVIVTPGVRPLWAGTDDQARIMTPAKAMEAGATYLVVGRPITAAPSRAEAAKRIVEEMAEGLARR.

Residues aspartate 12, lysine 34, 61 to 70 (DLKFHDIPNT), threonine 125, arginine 187, glutamine 196, glycine 216, and arginine 217 each bind substrate. Lysine 63 serves as the catalytic Proton donor.

This sequence belongs to the OMP decarboxylase family. Type 1 subfamily. As to quaternary structure, homodimer.

The enzyme catalyses orotidine 5'-phosphate + H(+) = UMP + CO2. It functions in the pathway pyrimidine metabolism; UMP biosynthesis via de novo pathway; UMP from orotate: step 2/2. Functionally, catalyzes the decarboxylation of orotidine 5'-monophosphate (OMP) to uridine 5'-monophosphate (UMP). The protein is Orotidine 5'-phosphate decarboxylase of Heliobacterium modesticaldum (strain ATCC 51547 / Ice1).